We begin with the raw amino-acid sequence, 556 residues long: MTWICFLAGLALLAIALGIAQHHLGTYMARVFTSDKDTRVETWCYRVMGVNPRAGQTWKSYARAVLAFSFCGVVFLYALQRLQPWLPWSLGKGSVNPAVSFNTAISFVTNTNWQAYSPEATLGHFVQLAGLCVQNFVSAATGIAIAVALIRGFVGHGEHTIGNFWVDLTRCTLRILMPIAAVAAFLLIAGGAVQNFTGFLHVTGVAGGNQVIPGGPVASQEAIKELGTNGGGFFNGNSSHPFENPQPWTNMLEIFLILLIPFSLPRTFGKMVEDVRQGRAILAAMVVLFTVNLCAMAAAEFSGHGTAARLAGAPMEGKEQRFGLAQSVLFANSTTMTSTGAVDSMHDSFTAIGGMFTLLNMMLGEISPGGVGSGLYGMLVIAVIAVFIAGLLVGRTPEYLGKKIGPREMKLSDLYILVMPTLVLCGVALSLAVPGLRSSVNTSIANPGEHGLSELVYAFTSAANNNGSAFAGLDASTNWLCAALGAAMLLGRFVPIILILALSGALVEREPVPVTAGTLPTHNALFTTLIVFTAILVTALVFFPVLTLGPLAEGLI.

10 helical membrane-spanning segments follow: residues 1 to 21 (MTWI…GIAQ), 60 to 80 (SYAR…YALQ), 130 to 150 (GLCV…VALI), 173 to 193 (LRIL…GGAV), 245 to 265 (PQPW…FSLP), 281 to 301 (ILAA…AAEF), 374 to 394 (GLYG…LLVG), 416 to 436 (ILVM…VPGL), 482 to 502 (AALG…ILAL), and 529 to 549 (LIVF…LTLG).

This sequence belongs to the KdpA family. As to quaternary structure, the system is composed of three essential subunits: KdpA, KdpB and KdpC.

It localises to the cell membrane. In terms of biological role, part of the high-affinity ATP-driven potassium transport (or Kdp) system, which catalyzes the hydrolysis of ATP coupled with the electrogenic transport of potassium into the cytoplasm. This subunit binds the extracellular potassium ions and delivers the ions to the membrane domain of KdpB through an intramembrane tunnel. This chain is Potassium-transporting ATPase potassium-binding subunit, found in Cutibacterium acnes (strain DSM 16379 / KPA171202) (Propionibacterium acnes).